The sequence spans 195 residues: ATP-dependent Clp protease proteolytic subunit (195 aa).

The active-site Nucleophile is S99. H124 is an active-site residue.

The protein belongs to the peptidase S14 family. In terms of assembly, fourteen ClpP subunits assemble into 2 heptameric rings which stack back to back to give a disk-like structure with a central cavity, resembling the structure of eukaryotic proteasomes.

The protein resides in the cytoplasm. The enzyme catalyses Hydrolysis of proteins to small peptides in the presence of ATP and magnesium. alpha-casein is the usual test substrate. In the absence of ATP, only oligopeptides shorter than five residues are hydrolyzed (such as succinyl-Leu-Tyr-|-NHMec, and Leu-Tyr-Leu-|-Tyr-Trp, in which cleavage of the -Tyr-|-Leu- and -Tyr-|-Trp bonds also occurs).. Functionally, cleaves peptides in various proteins in a process that requires ATP hydrolysis. Has a chymotrypsin-like activity. Plays a major role in the degradation of misfolded proteins. The sequence is that of ATP-dependent Clp protease proteolytic subunit from Desulforamulus reducens (strain ATCC BAA-1160 / DSM 100696 / MI-1) (Desulfotomaculum reducens).